Reading from the N-terminus, the 429-residue chain is Enolase (429 aa).

Q162 provides a ligand contact to (2R)-2-phosphoglycerate. Residue E204 is the Proton donor of the active site. Residues D241, E288, and D315 each contribute to the Mg(2+) site. (2R)-2-phosphoglycerate is bound by residues K340, R369, S370, and K391. Residue K340 is the Proton acceptor of the active site.

The protein belongs to the enolase family. It depends on Mg(2+) as a cofactor.

It is found in the cytoplasm. The protein resides in the secreted. The protein localises to the cell surface. It catalyses the reaction (2R)-2-phosphoglycerate = phosphoenolpyruvate + H2O. It functions in the pathway carbohydrate degradation; glycolysis; pyruvate from D-glyceraldehyde 3-phosphate: step 4/5. In terms of biological role, catalyzes the reversible conversion of 2-phosphoglycerate (2-PG) into phosphoenolpyruvate (PEP). It is essential for the degradation of carbohydrates via glycolysis. The protein is Enolase of Bacteroides fragilis (strain ATCC 25285 / DSM 2151 / CCUG 4856 / JCM 11019 / LMG 10263 / NCTC 9343 / Onslow / VPI 2553 / EN-2).